Reading from the N-terminus, the 155-residue chain is MKIRILSLGEKPPKWVSEGYDEYKKRLSKSIPLELIELPIAKRTKTGNPKLWMEQEAKTILTKLSDSDHLVILDVNSKIISTEELAEKMQNWKFNNPNVVILIGGPDGIDQSIKNIAKEKISISKMTFPHPLVRIIIAEQLYRAYTILEGHPYHK.

S-adenosyl-L-methionine-binding positions include Leu-73, Gly-104, and 123-128; that span reads ISKMTF.

This sequence belongs to the RNA methyltransferase RlmH family. As to quaternary structure, homodimer.

It is found in the cytoplasm. The catalysed reaction is pseudouridine(1915) in 23S rRNA + S-adenosyl-L-methionine = N(3)-methylpseudouridine(1915) in 23S rRNA + S-adenosyl-L-homocysteine + H(+). In terms of biological role, specifically methylates the pseudouridine at position 1915 (m3Psi1915) in 23S rRNA. The polypeptide is Ribosomal RNA large subunit methyltransferase H (Francisella philomiragia subsp. philomiragia (strain ATCC 25017 / CCUG 19701 / FSC 153 / O#319-036)).